The sequence spans 227 residues: Ribonuclease HII (227 aa).

Residues 1-210 (MKLAGIDEAG…LKKIEEKLAK (210 aa)) form the RNase H type-2 domain. A divalent metal cation is bound by residues Asp7, Glu8, and Asp105.

The protein belongs to the RNase HII family. Mn(2+) is required as a cofactor. It depends on Mg(2+) as a cofactor.

Its subcellular location is the cytoplasm. It carries out the reaction Endonucleolytic cleavage to 5'-phosphomonoester.. Functionally, endonuclease that specifically degrades the RNA of RNA-DNA hybrids. The chain is Ribonuclease HII from Thermococcus onnurineus (strain NA1).